Here is a 385-residue protein sequence, read N- to C-terminus: Chaperone protein DnaJ (385 aa).

One can recognise a J domain in the interval 5-70; the sequence is DYYEVLGVAK…QKRAAYDRYG (66 aa). Residues 145–223 form a CR-type zinc finger; the sequence is GFDTEIRVPS…CDGVGRTRRN (79 aa). Zn(2+) contacts are provided by cysteine 158, cysteine 161, cysteine 175, cysteine 178, cysteine 197, cysteine 200, cysteine 211, and cysteine 214. CXXCXGXG motif repeat units follow at residues 158–165, 175–182, 197–204, and 211–218; these read CDTCHGSG, CRTCGGSG, CPTCHGTG, and CPSCDGVG.

Belongs to the DnaJ family. As to quaternary structure, homodimer. The cofactor is Zn(2+).

Its subcellular location is the cytoplasm. Participates actively in the response to hyperosmotic and heat shock by preventing the aggregation of stress-denatured proteins and by disaggregating proteins, also in an autonomous, DnaK-independent fashion. Unfolded proteins bind initially to DnaJ; upon interaction with the DnaJ-bound protein, DnaK hydrolyzes its bound ATP, resulting in the formation of a stable complex. GrpE releases ADP from DnaK; ATP binding to DnaK triggers the release of the substrate protein, thus completing the reaction cycle. Several rounds of ATP-dependent interactions between DnaJ, DnaK and GrpE are required for fully efficient folding. Also involved, together with DnaK and GrpE, in the DNA replication of plasmids through activation of initiation proteins. In Bordetella pertussis (strain Tohama I / ATCC BAA-589 / NCTC 13251), this protein is Chaperone protein DnaJ.